The primary structure comprises 338 residues: 1-aminocyclopropane-1-carboxylate deaminase (338 aa).

Position 51 is an N6-(pyridoxal phosphate)lysine (lysine 51). Serine 78 acts as the Nucleophile in catalysis.

Belongs to the ACC deaminase/D-cysteine desulfhydrase family. As to quaternary structure, homotrimer. It depends on pyridoxal 5'-phosphate as a cofactor.

It catalyses the reaction 1-aminocyclopropane-1-carboxylate + H2O = 2-oxobutanoate + NH4(+). Catalyzes a cyclopropane ring-opening reaction, the irreversible conversion of 1-aminocyclopropane-1-carboxylate (ACC) to ammonia and alpha-ketobutyrate. Allows growth on ACC as a nitrogen source. This Paraburkholderia xenovorans (strain LB400) protein is 1-aminocyclopropane-1-carboxylate deaminase.